The sequence spans 335 residues: DNA-directed RNA polymerase subunit alpha (335 aa).

The interval 1–231 (MVREKITVST…DLLIPFLHTK (231 aa)) is alpha N-terminal domain (alpha-NTD). The alpha C-terminal domain (alpha-CTD) stretch occupies residues 263-335 (KKMALKSIFI…FVIDLPKNKF (73 aa)).

This sequence belongs to the RNA polymerase alpha chain family. As to quaternary structure, in plastids the minimal PEP RNA polymerase catalytic core is composed of four subunits: alpha, beta, beta', and beta''. When a (nuclear-encoded) sigma factor is associated with the core the holoenzyme is formed, which can initiate transcription.

It localises to the plastid. The protein resides in the chloroplast. It catalyses the reaction RNA(n) + a ribonucleoside 5'-triphosphate = RNA(n+1) + diphosphate. Its function is as follows. DNA-dependent RNA polymerase catalyzes the transcription of DNA into RNA using the four ribonucleoside triphosphates as substrates. This chain is DNA-directed RNA polymerase subunit alpha, found in Helianthus annuus (Common sunflower).